A 100-amino-acid chain; its full sequence is Urease subunit gamma (100 aa).

The protein belongs to the urease gamma subunit family. Heterotrimer of UreA (gamma), UreB (beta) and UreC (alpha) subunits. Three heterotrimers associate to form the active enzyme.

The protein localises to the cytoplasm. It catalyses the reaction urea + 2 H2O + H(+) = hydrogencarbonate + 2 NH4(+). It functions in the pathway nitrogen metabolism; urea degradation; CO(2) and NH(3) from urea (urease route): step 1/1. This is Urease subunit gamma from Mycobacterium sp. (strain JLS).